We begin with the raw amino-acid sequence, 332 residues long: Ketol-acid reductoisomerase (NADP(+)) (332 aa).

A KARI N-terminal Rossmann domain is found at 2–182 (AKIYHDLEVS…GATRAGVLET (181 aa)). NADP(+) contacts are provided by residues 25–28 (YGSQ), R48, S53, and 83–86 (DTEQ). H108 is a catalytic residue. G134 provides a ligand contact to NADP(+). The KARI C-terminal knotted domain maps to 183-328 (TFKEETETDL…KVIREMMPWL (146 aa)). Residues D191, E195, E227, and E231 each contribute to the Mg(2+) site. S252 is a substrate binding site.

The protein belongs to the ketol-acid reductoisomerase family. Mg(2+) serves as cofactor.

It catalyses the reaction (2R)-2,3-dihydroxy-3-methylbutanoate + NADP(+) = (2S)-2-acetolactate + NADPH + H(+). The catalysed reaction is (2R,3R)-2,3-dihydroxy-3-methylpentanoate + NADP(+) = (S)-2-ethyl-2-hydroxy-3-oxobutanoate + NADPH + H(+). Its pathway is amino-acid biosynthesis; L-isoleucine biosynthesis; L-isoleucine from 2-oxobutanoate: step 2/4. The protein operates within amino-acid biosynthesis; L-valine biosynthesis; L-valine from pyruvate: step 2/4. In terms of biological role, involved in the biosynthesis of branched-chain amino acids (BCAA). Catalyzes an alkyl-migration followed by a ketol-acid reduction of (S)-2-acetolactate (S2AL) to yield (R)-2,3-dihydroxy-isovalerate. In the isomerase reaction, S2AL is rearranged via a Mg-dependent methyl migration to produce 3-hydroxy-3-methyl-2-ketobutyrate (HMKB). In the reductase reaction, this 2-ketoacid undergoes a metal-dependent reduction by NADPH to yield (R)-2,3-dihydroxy-isovalerate. This chain is Ketol-acid reductoisomerase (NADP(+)), found in Dictyoglomus thermophilum (strain ATCC 35947 / DSM 3960 / H-6-12).